The sequence spans 398 residues: Cholinephosphotransferase 1 (398 aa).

Ala-2 bears the N-acetylalanine mark. Residues 2-62 (AAGAGARPAP…LLQWIPLWMA (61 aa)) lie on the Cytoplasmic side of the membrane. The helical transmembrane segment at 63–83 (PNTITLIGLAINLVTTLVLIF) threads the bilayer. Residue Asn-64 participates in CDP-choline binding. Residues 84–93 (YCPTVTEEAP) are Lumenal-facing. The helical transmembrane segment at 94 to 118 (YWTYLLCALGLFIYQSLDAIDGKQA) threads the bilayer. Asp-111 and Asp-114 together coordinate Mg(2+). Arg-119 provides a ligand contact to CDP-choline. Over 119-125 (RRTNSCS) the chain is Cytoplasmic. Residues 126-150 (PLGELFDHGCDSLSTVFMAIGASIA) traverse the membrane as a helical segment. Residue Asp-132 participates in Mg(2+) binding. The Proton acceptor role is filled by His-133. Residue Asp-136 participates in Mg(2+) binding. At 151-160 (VRLGTHPDWL) the chain is on the lumenal side. The helical transmembrane segment at 161–179 (FFCSFVGMFMFYCAHWQTY) threads the bilayer. The Cytoplasmic portion of the chain corresponds to 180–190 (VSGVLRFGRVD). A helical membrane pass occupies residues 191–207 (VTEIQVALVIVFMLSTF). Residues 208–222 (GGATMWDYTIPILEI) are Lumenal-facing. A helical transmembrane segment spans residues 223–248 (KLKIVPVLGVVGGLIFSCSNYFHVIL). At 249–265 (HGGVGKNGSTIAGTSVL) the chain is on the cytoplasmic side. Residues 266–281 (SPGLHIGLIIILAIMI) form a helical membrane-spanning segment. Over 282-293 (YKKSATNMFEKH) the chain is Lumenal. A helical transmembrane segment spans residues 294–316 (PCLYTLMFGCVFAKVAQKLVIAH). Over 317 to 329 (MTKSELYLQDTVF) the chain is Cytoplasmic. The helical transmembrane segment at 330 to 339 (IGPGLLFLDQ) threads the bilayer. The Lumenal portion of the chain corresponds to 340-346 (YFNNFID). Residues 347–376 (EYVVLWIAMVISSFDMMIYFTSLCLQISRH) traverse the membrane as a helical segment. Over 377–398 (LHLNIFKTSCQQAPEQVYKHID) the chain is Cytoplasmic.

It belongs to the CDP-alcohol phosphatidyltransferase class-I family. Requires Mg(2+) as cofactor. Mn(2+) serves as cofactor. Expressed in brain, heart, lung, liver, spleen, intestine and muscle. Down-regulated in kidney of type 2 diabetic KK/Ta mice.

The protein resides in the golgi apparatus membrane. The catalysed reaction is CDP-choline + a 1,2-diacyl-sn-glycerol = a 1,2-diacyl-sn-glycero-3-phosphocholine + CMP + H(+). The enzyme catalyses 1-octadecanoyl-2-(5Z,8Z,11Z,14Z-eicosatetraenoyl)-sn-glycerol + CDP-choline = 1-octadecanoyl-2-(5Z,8Z,11Z,14Z-eicosatetraenoyl)-sn-glycero-3-phosphocholine + CMP + H(+). It catalyses the reaction 1-hexadecanoyl-2-(9Z-octadecenoyl)-sn-glycerol + CDP-choline = 1-hexadecanoyl-2-(9Z-octadecenoyl)-sn-glycero-3-phosphocholine + CMP + H(+). It carries out the reaction 1-hexadecanoyl-2-(4Z,7Z,10Z,13Z,16Z,19Z-docosahexaenoyl)-sn-glycerol + CDP-choline = 1-hexadecanoyl-2-(4Z,7Z,10Z,13Z,16Z,19Z-docosahexaenoyl)-sn-glycero-3-phosphocholine + CMP + H(+). The catalysed reaction is 1,2-dioctanoyl-sn-glycerol + CDP-choline = 1,2-dioctanoyl-sn-glycero-3-phosphocholine + CMP + H(+). Its pathway is phospholipid metabolism; phosphatidylcholine biosynthesis; phosphatidylcholine from phosphocholine: step 2/2. Its function is as follows. Catalyzes the final step of de novo phosphatidylcholine (PC) synthesis, i.e. the transfer of choline phosphate from CDP-choline to the free hydroxyl of a diacylglycerol (DAG), producing a PC. It thereby plays a central role in the formation and maintenance of vesicular membranes. In Mus musculus (Mouse), this protein is Cholinephosphotransferase 1.